Here is a 461-residue protein sequence, read N- to C-terminus: Ig heavy chain C region, membrane-bound form (461 aa).

The interval alanine 1–proline 99 is CH1. The CH2 stretch occupies residues aspartate 100 to glutamine 205. N-linked (GlcNAc...) asparagine glycans are attached at residues asparagine 164, asparagine 200, asparagine 245, asparagine 275, asparagine 374, asparagine 411, asparagine 415, and asparagine 437. The segment at valine 206 to glutamate 308 is CH3. A CH4 region spans residues valine 309–serine 418. Residues alanine 438–valine 458 form a helical membrane-spanning segment.

It localises to the cell membrane. The polypeptide is Ig heavy chain C region, membrane-bound form (Heterodontus francisci (Horn shark)).